The sequence spans 365 residues: Class I histocompatibility antigen, Gogo-C*0101/C*0102 alpha chain (365 aa).

The signal sequence occupies residues 1–24; that stretch reads MRVMAPRTLILLLSGALALTETWA. The tract at residues 25–114 is alpha-1; the sequence is GSHSMRYFFT…LRGYYNQSED (90 aa). Residues 25–308 are Extracellular-facing; the sequence is GSHSMRYFFT…EPSSQPTIPI (284 aa). Residue Asn-110 is glycosylated (N-linked (GlcNAc...) asparagine). The interval 115–206 is alpha-2; the sequence is GSHTFQRMYG…ENGKETLQRA (92 aa). 2 cysteine pairs are disulfide-bonded: Cys-125/Cys-188 and Cys-227/Cys-283. The interval 207 to 298 is alpha-3; it reads DPPKTHVTHH…GLLEPLTLRW (92 aa). The Ig-like C1-type domain maps to 209–297; it reads PKTHVTHHPI…KGLLEPLTLR (89 aa). Residues 299–308 form a connecting peptide region; the sequence is EPSSQPTIPI. The chain crosses the membrane as a helical span at residues 309-332; sequence VGIVAGLAVLAVVFTGTVVAAVMC. Residues 333-365 are Cytoplasmic-facing; that stretch reads RRKSSGGKGGSCSQAACSNSAQGSDESLIACKA. Residues Ser-356 and Ser-359 each carry the phosphoserine modification.

Belongs to the MHC class I family. As to quaternary structure, heterodimer of an alpha chain and a beta chain (beta-2-microglobulin).

Its subcellular location is the membrane. Involved in the presentation of foreign antigens to the immune system. This is Class I histocompatibility antigen, Gogo-C*0101/C*0102 alpha chain from Gorilla gorilla gorilla (Western lowland gorilla).